Consider the following 186-residue polypeptide: Interferon beta-3 (186 aa).

Positions 1–21 (MTYRCLLPMVLLLCFSTTALS) are cleaved as a signal peptide. Residues C52 and C161 are joined by a disulfide bond. N-linked (GlcNAc...) asparagine glycosylation is found at N131 and N173.

It belongs to the alpha/beta interferon family. Monomer.

It localises to the secreted. In terms of biological role, has antiviral, antibacterial and anticancer activities. This Bos taurus (Bovine) protein is Interferon beta-3 (IFNB3).